The sequence spans 242 residues: Large ribosomal subunit protein uL1 (242 aa).

It belongs to the universal ribosomal protein uL1 family. As to quaternary structure, part of the 50S ribosomal subunit.

Functionally, binds directly to 23S rRNA. The L1 stalk is quite mobile in the ribosome, and is involved in E site tRNA release. Its function is as follows. Protein L1 is also a translational repressor protein, it controls the translation of the L11 operon by binding to its mRNA. In Wigglesworthia glossinidia brevipalpis, this protein is Large ribosomal subunit protein uL1.